The following is a 790-amino-acid chain: Cadherin-6 (790 aa).

Positions 1–30 (MRTYHCFWLLFWAGQPHQSFLTLLSKRTSG) are cleaved as a signal peptide. Residues 31 to 53 (FPEKEKVLVLSGNSRRDLSRSKR) constitute a propeptide that is removed on maturation. 5 consecutive Cadherin domains span residues 54 to 159 (SWMW…EPMF), 160 to 268 (TKDV…PPRF), 269 to 383 (PQST…PPVF), 384 to 486 (SRPA…DNAP), and 487 to 608 (EFAM…LIHP). Over 54–615 (SWMWNQFFLL…IHPTGLSTGA (562 aa)) the chain is Extracellular. Residues asparagine 165 and asparagine 255 are each glycosylated (N-linked (GlcNAc...) asparagine). Positions 261–289 (VNDNPPRFPQSTYQFRAPESTPPDSPIGR) are disordered. N-linked (GlcNAc...) asparagine glycans are attached at residues asparagine 437, asparagine 455, and asparagine 536. Residues 616 to 636 (LIAILLCIIILLVTVVLFAAL) traverse the membrane as a helical segment. Over 637 to 790 (RRQRKKEPLI…YGSMDSDKDS (154 aa)) the chain is Cytoplasmic.

It is found in the cell membrane. Its function is as follows. Cadherins are calcium-dependent cell adhesion proteins. They preferentially interact with themselves in a homophilic manner in connecting cells; cadherins may thus contribute to the sorting of heterogeneous cell types. The protein is Cadherin-6 (CDH6) of Gallus gallus (Chicken).